The chain runs to 88 residues: Mitochondrial import inner membrane translocase subunit Tim10 (88 aa).

The Twin CX3C motif signature appears at 25–49 (CSAKCISKYNEGDLNVGESVCAERC). Intrachain disulfides connect C25/C49 and C29/C45. Residues 63–88 (KMSGTQPGQEVPQEAPAAAPEKKGWF) form a disordered region. Positions 68-81 (QPGQEVPQEAPAAA) are enriched in low complexity.

This sequence belongs to the small Tim family. In terms of assembly, heterohexamer; composed of 3 copies of timm9 and 3 copies of timm10, named soluble 70 kDa complex. Associates directly with the TIM22 complex, whose core is composed of timm22. Interacts with the transmembrane regions of multi-pass transmembrane proteins in transit.

The protein resides in the mitochondrion inner membrane. In terms of biological role, component of the TIM22 complex, a complex that mediates the import and insertion of multi-pass transmembrane proteins into the mitochondrial inner membrane. The TIM22 complex forms a twin-pore translocase that uses the membrane potential as external driving force. In Dictyostelium discoideum (Social amoeba), this protein is Mitochondrial import inner membrane translocase subunit Tim10 (timm10).